Reading from the N-terminus, the 712-residue chain is Sterol uptake control protein 2 (712 aa).

The segment covering 1 to 19 (MMMTVKQESPNSTLNTSEF) has biased composition (polar residues). The disordered stretch occupies residues 1 to 52 (MMMTVKQESPNSTLNTSEFSSDENLKTNNSEPPKKVSKSSTGKRKYHQKSRN). Over residues 35 to 50 (KVSKSSTGKRKYHQKS) the composition is skewed to basic residues. Positions 54–81 (CSTCKKRRVKCDEQRPVCGNCTKLKLDC) form a DNA-binding region, zn(2)-C6 fungal-type. Disordered stretches follow at residues 95–150 (KKDI…VIPP) and 236–342 (TTVP…ANPL). Polar residues-rich tracts occupy residues 113-143 (STVS…QDIK), 252-306 (RKSQ…SGSP), and 326-337 (KSLPNISPNMSI).

It localises to the nucleus. Transcription factor involved in the regulation of ergosterol biosynthetic genes such as ERG2 and ERG11 through direct binding to sterol response elements (SREs) in the promoters. Also binds to its own promoter on 2 cis-acting elements to promote autoregulation. Regulates sterol uptake across the plasma membrane. Acts as a major regulator of ascorbic acid-induced response. Plays a role in the triggering of pyroptosis, an inflammasome-mediated programmed cell death pathway in macrophages, allowing macrophages escaping. The protein is Sterol uptake control protein 2 of Candida albicans (strain SC5314 / ATCC MYA-2876) (Yeast).